We begin with the raw amino-acid sequence, 64 residues long: Large ribosomal subunit protein bL28 (64 aa).

The segment at 1 to 23 (MSKECYFTGRKTVSSNNRSHAMN) is disordered. Residues 11–23 (KTVSSNNRSHAMN) are compositionally biased toward polar residues.

This sequence belongs to the bacterial ribosomal protein bL28 family.

This is Large ribosomal subunit protein bL28 from Lactococcus lactis subsp. cremoris (strain SK11).